Here is an 842-residue protein sequence, read N- to C-terminus: Ionotropic receptor 21a (842 aa).

Residues 1–15 (MSYYWVALVLFTAQA) form the signal peptide. N-linked (GlcNAc...) asparagine glycosylation occurs at N325. The next 2 helical transmembrane spans lie at 405-425 (WPVWVALICVYLGGIFPIVFT) and 437-457 (WGEVENMFWYVFGMFTNAFSF). N469 carries an N-linked (GlcNAc...) asparagine glycan. A helical transmembrane segment spans residues 479 to 499 (WLFTIIITSCYTGSIIAFVTL). N-linked (GlcNAc...) asparagine glycans are attached at residues N533, N558, N583, and N588. A helical membrane pass occupies residues 680–700 (MFLLMALGYFLGATALVSEIV). A disordered region spans residues 722–745 (WSSASSGSMLRTNAEQLSHDKRKA). Residues N765 and N797 are each glycosylated (N-linked (GlcNAc...) asparagine).

The protein belongs to the glutamate-gated ion channel (TC 1.A.10.1) family. As to expression, expressed in the dorsal organ cool cells. In the antenna, expressed in approximately six neurons in the arista as well as five to ten neurons near the third chamber of the sacculus.

It is found in the cell membrane. Integral part of a neural sensory system in the antenna that provides the neural basis for the response to environmental changes in temperature (thermosensation). Together with Ir25a and Ir93a, mediates the response of the dorsal organ cool cells, a trio of cool-responsive neurons, to cooling and is required for cool avoidance behavior. In Drosophila melanogaster (Fruit fly), this protein is Ionotropic receptor 21a.